A 339-amino-acid polypeptide reads, in one-letter code: Phenylalanine--tRNA ligase alpha subunit (339 aa).

Position 254 (E254) interacts with Mg(2+).

Belongs to the class-II aminoacyl-tRNA synthetase family. Phe-tRNA synthetase alpha subunit type 1 subfamily. In terms of assembly, tetramer of two alpha and two beta subunits. It depends on Mg(2+) as a cofactor.

The protein resides in the cytoplasm. The enzyme catalyses tRNA(Phe) + L-phenylalanine + ATP = L-phenylalanyl-tRNA(Phe) + AMP + diphosphate + H(+). This Clostridium botulinum (strain Alaska E43 / Type E3) protein is Phenylalanine--tRNA ligase alpha subunit.